Consider the following 119-residue polypeptide: HTH-type transcriptional regulator SarX (119 aa).

Positions 55-78 form a DNA-binding region, H-T-H motif; that stretch reads LKTAMDELDLSRTKLLVSIRRLIE.

Belongs to the SarA family.

It is found in the cytoplasm. In terms of biological role, involved in the regulation of virulence genes. Acts as a repressor of the agr locus and consequently targets genes regulated by the agr system such as sspA, hla and hlb. Binds directly to the agr promoter region. This is HTH-type transcriptional regulator SarX (sarX) from Staphylococcus aureus (strain USA300).